The following is a 787-amino-acid chain: DNA ligase (787 aa).

Residues 32-36 (DVEYD), 81-82 (SL), and Glu121 each bind NAD(+). The active-site N6-AMP-lysine intermediate is Lys123. NAD(+) is bound by residues Arg144, Glu181, Lys297, and Lys321. Zn(2+) contacts are provided by Cys415, Cys418, Cys445, and Cys451. Residues 703–787 (VEGLPLAGQT…RLIELGVAVD (85 aa)) enclose the BRCT domain.

Belongs to the NAD-dependent DNA ligase family. LigA subfamily. The cofactor is Mg(2+). It depends on Mn(2+) as a cofactor.

The catalysed reaction is NAD(+) + (deoxyribonucleotide)n-3'-hydroxyl + 5'-phospho-(deoxyribonucleotide)m = (deoxyribonucleotide)n+m + AMP + beta-nicotinamide D-nucleotide.. DNA ligase that catalyzes the formation of phosphodiester linkages between 5'-phosphoryl and 3'-hydroxyl groups in double-stranded DNA using NAD as a coenzyme and as the energy source for the reaction. It is essential for DNA replication and repair of damaged DNA. The chain is DNA ligase from Pseudomonas syringae pv. syringae (strain B728a).